The following is a 184-amino-acid chain: Elongation factor P (184 aa).

This sequence belongs to the elongation factor P family.

It localises to the cytoplasm. It participates in protein biosynthesis; polypeptide chain elongation. Functionally, involved in peptide bond synthesis. Stimulates efficient translation and peptide-bond synthesis on native or reconstituted 70S ribosomes in vitro. Probably functions indirectly by altering the affinity of the ribosome for aminoacyl-tRNA, thus increasing their reactivity as acceptors for peptidyl transferase. This chain is Elongation factor P, found in Acidovorax ebreus (strain TPSY) (Diaphorobacter sp. (strain TPSY)).